Reading from the N-terminus, the 357-residue chain is Homoarginine-6-hydroxylase 2-ODD-C23.2 (357 aa).

In terms of domain architecture, Fe2OG dioxygenase spans 208–308 (PFWVMRIIGY…RVCVAFFYET (101 aa)). Histidine 231, aspartate 233, and histidine 289 together coordinate Fe cation. 2-oxoglutarate is bound at residue arginine 299.

The protein belongs to the iron/ascorbate-dependent oxidoreductase family. Fe(2+) is required as a cofactor. Expressed in senescent leaves.

It localises to the cytoplasm. The protein localises to the cytosol. It carries out the reaction L-homoarginine + 2-oxoglutarate + O2 = 6-hydroxy-L-homoarginine + succinate + CO2. The catalysed reaction is L-arginine + 2-oxoglutarate + O2 = 5-hydroxy-L-arginine + succinate + CO2. With respect to regulation, slightly inhibited by canavanine (Can), the 5-oxa-analog of arginine. Its function is as follows. 2-oxoglutarate-dependent dioxygenase catalyzing homoarginine 6-hydroxylation and arginine-5-hydroxylation thus producing 6-hydroxy-L-homoarginine and 5-hydroxy-L-arginine, respectively. Guanidine (Gd) is in turn synthesized by the spontaneous conversion of 6-hydroxy-L-homoarginine and 5-hydroxy-L-arginine to (S)-2-amino-6-oxohexanoate (RHEA:79843) and L-glutamate 5-semialdehyde (RHEA:31527); guanidine is a nitrogen-rich compound that may serve as a defense or signaling substance. The protein is Homoarginine-6-hydroxylase 2-ODD-C23.2 of Arabidopsis thaliana (Mouse-ear cress).